A 405-amino-acid chain; its full sequence is Serine/threonine transporter SstT (405 aa).

A run of 9 helical transmembrane segments spans residues 13–33, 43–63, 81–101, 140–160, 191–211, 215–235, 297–317, 338–358, and 362–382; these read GNLV…ATFS, IGNL…FILV, IVVL…ILSF, ALMN…GLAL, FGIF…ALAG, LLAV…PMIV, MAGA…TMGI, ASGV…LFGI, and IAMQ…SAET.

It belongs to the dicarboxylate/amino acid:cation symporter (DAACS) (TC 2.A.23) family.

The protein resides in the cell inner membrane. It carries out the reaction L-serine(in) + Na(+)(in) = L-serine(out) + Na(+)(out). It catalyses the reaction L-threonine(in) + Na(+)(in) = L-threonine(out) + Na(+)(out). Its function is as follows. Involved in the import of serine and threonine into the cell, with the concomitant import of sodium (symport system). The protein is Serine/threonine transporter SstT of Vibrio cholerae serotype O1 (strain ATCC 39315 / El Tor Inaba N16961).